The sequence spans 207 residues: MSGPHHCSADCDEHPFESGPNDTLYSCIRKESIVTLNEAVPDSGKLVFKPWDLRYDDTDIVESDADDQLLFQVPFAGAATLKSILVRIFPNETAPHSFSLFPNRTDLDFDTIGDVQATETFEFPLTFEGSHIFEFPVKTRLYQNLQNLNIFFTKSDGSDDPTQIAYIGLRGSFVPFKGDPVVTIYEATPRPSDHPKVNQEEVFRSYY.

Positions 13–189 constitute a PITH domain; it reads EHPFESGPND…PVVTIYEATP (177 aa).

It belongs to the PITHD1 family.

The protein localises to the cytoplasm. The protein resides in the nucleus. The protein is PITH domain-containing protein P35G2.02 of Schizosaccharomyces pombe (strain 972 / ATCC 24843) (Fission yeast).